Consider the following 276-residue polypeptide: Undecaprenyl-diphosphatase (276 aa).

A run of 6 helical transmembrane segments spans residues 43-63, 85-105, 109-129, 184-204, 218-238, and 254-274; these read RAMAFNIIIQLGAILAVVWEF, INLLIAFLPAVVLGVIFADLI, LFNPITVATALVVGGLIMLWA, ATEFSFFLAMPTMVGAAVYSG, VFAIGFVTAFVFAMIAVKGLL, and IAFGLLILATWQFGWVDWTAA.

Belongs to the UppP family.

The protein resides in the cell inner membrane. It catalyses the reaction di-trans,octa-cis-undecaprenyl diphosphate + H2O = di-trans,octa-cis-undecaprenyl phosphate + phosphate + H(+). Its function is as follows. Catalyzes the dephosphorylation of undecaprenyl diphosphate (UPP). Confers resistance to bacitracin. This is Undecaprenyl-diphosphatase from Pseudomonas fluorescens (strain ATCC BAA-477 / NRRL B-23932 / Pf-5).